The chain runs to 880 residues: MAQHEVSMPPKYDHRAVEAGRYEWWLKGKFFEATGDPNKRPFTIVIPPPNVTGKLHLGHAWDTTLQDIITRMKRMQGYDVLWLPGMDHAGIATQAKVEEKLRQQGLSRYDLGREKFLEETWKWKEEYAGHIRSQWAKLGLGLDYTRERFTLDEGLSKAVREVFVSLYRKGLIYRGEYIINWDPVTKTALSDIEVVYKEVKGALYHMRYPLADGSGFIEVATTRPETMLGDTAVAVHPDDERYKHLIGKMVKLPIVGREIPIIADEYVDMEFGSGAVKITPAHDPNDFEIGNRHNLPRILVMNEDGTMNENAMQYQGLDRFECRKQIVRDLQEQGVLFKIEEHVHSVGHSERSGAVIEPYLSTQWFVKMKPLAEAAIKLQQTDGKVQFVPERFEKTYLHWLENIRHWCISRQLWWGHRIPAWYHKETGEIYVDHEPPKDIENWEQDPDVLDTWFSSALWPFSTMGWPDTDSPDYKRYYPTDVLVTGYDIIFFWVSRMIFQGLEFTGKRPFKDVLIHGLVRDAQGRKMSKSLGNGVDPMDVIDQYGADALRYFLATGSSPGQDLRFSTEKVEATWNFANKIWNASRFALMNMGGMTYEELDLSGEKTVADHWILTRLNETIETVTKLAEKYEFGERGRTLYNFIWDDLCDWYIEMAKLPLYGDDEAAKKTTRSVLAYVLDNTMRLLHPFMPFITEEIWQNLPHEGESITVAPWPQVRPELSNEEAAEEMRMLVDIIRAVRNVRAEVNTPPSKPIALYIKTKDEHVRAALLKNRAYLERFCNPSELLIDTNVPAPDKAMTAVVTGAELIMPLEGLINIEEEIKRLEKELDKWNKEVERVEKKLANEGFLAKAPAHVVEEERRKRQDYIEKREAVKARLAELKR.

The 'HIGH' region motif lies at 49-59; sequence PNVTGKLHLGH. The 'KMSKS' region signature appears at 525–529; sequence KMSKS. ATP is bound at residue Lys528. Positions 809–880 form a coiled coil; it reads LEGLINIEEE…VKARLAELKR (72 aa).

The protein belongs to the class-I aminoacyl-tRNA synthetase family. ValS type 1 subfamily. Monomer.

The protein localises to the cytoplasm. The catalysed reaction is tRNA(Val) + L-valine + ATP = L-valyl-tRNA(Val) + AMP + diphosphate. Functionally, catalyzes the attachment of valine to tRNA(Val). As ValRS can inadvertently accommodate and process structurally similar amino acids such as threonine, to avoid such errors, it has a 'posttransfer' editing activity that hydrolyzes mischarged Thr-tRNA(Val) in a tRNA-dependent manner. This is Valine--tRNA ligase (valS) from Geobacillus stearothermophilus (Bacillus stearothermophilus).